A 118-amino-acid chain; its full sequence is Putative pterin-4-alpha-carbinolamine dehydratase (118 aa).

It belongs to the pterin-4-alpha-carbinolamine dehydratase family.

The catalysed reaction is (4aS,6R)-4a-hydroxy-L-erythro-5,6,7,8-tetrahydrobiopterin = (6R)-L-erythro-6,7-dihydrobiopterin + H2O. This chain is Putative pterin-4-alpha-carbinolamine dehydratase, found in Pseudomonas paraeruginosa (strain DSM 24068 / PA7) (Pseudomonas aeruginosa (strain PA7)).